The chain runs to 629 residues: Forkhead box protein O1-B (629 aa).

Disordered regions lie at residues 1–54 (MAEP…PEQG), 88–134 (CAHP…SRRN), 211–308 (SWWM…SPFL), and 359–397 (KNNTQGSQEAQTALSSPLMQGSPGYPSYTSPNMGPQPQV). The span at 36-46 (QPGNSNTSSPA) shows a compositional bias: polar residues. Low complexity-rich tracts occupy residues 90–107 (HPQQQHPQQPNPQLTHPQ) and 115–133 (PASGSSPAAAQRKSSSSRR). A DNA-binding region (fork-head) is located at residues 136 to 230 (WGNMSYADLI…KSGKSPRRRA (95 aa)). Over residues 240–251 (TKSRGRAAKKKM) the composition is skewed to basic residues. 3 stretches are compositionally biased toward polar residues: residues 291–302 (TRASSDASTLSG), 359–377 (KNNTQGSQEAQTALSSPLM), and 385–397 (SYTSPNMGPQPQV).

It localises to the cytoplasm. The protein resides in the nucleus. In terms of biological role, transcription factor that regulates metabolic homeostasis in response to oxidative stress. Binds to the consensus sequence 5'-TT[G/A]TTTTG-3' and the related Daf-16 family binding element (DBE) with consensus sequence 5'-TT[G/A]TTTAC-3'. Main regulator of redox balance and osteoblast numbers and controls bone mass. Orchestrates the endocrine function of the skeleton in regulating glucose metabolism. May act as a positive regulator of apoptosis in cardiac smooth muscle cells as a result of its transcriptional activation of pro-apoptotic genes. The protein is Forkhead box protein O1-B (foxo1b) of Danio rerio (Zebrafish).